A 185-amino-acid polypeptide reads, in one-letter code: ATP synthase subunit delta (185 aa).

It belongs to the ATPase delta chain family. F-type ATPases have 2 components, F(1) - the catalytic core - and F(0) - the membrane proton channel. F(1) has five subunits: alpha(3), beta(3), gamma(1), delta(1), epsilon(1). CF(0) has four main subunits: a(1), b(1), b'(1) and c(10-14). The alpha and beta chains form an alternating ring which encloses part of the gamma chain. F(1) is attached to F(0) by a central stalk formed by the gamma and epsilon chains, while a peripheral stalk is formed by the delta, b and b' chains.

Its subcellular location is the cellular thylakoid membrane. Its function is as follows. F(1)F(0) ATP synthase produces ATP from ADP in the presence of a proton or sodium gradient. F-type ATPases consist of two structural domains, F(1) containing the extramembraneous catalytic core and F(0) containing the membrane proton channel, linked together by a central stalk and a peripheral stalk. During catalysis, ATP synthesis in the catalytic domain of F(1) is coupled via a rotary mechanism of the central stalk subunits to proton translocation. In terms of biological role, this protein is part of the stalk that links CF(0) to CF(1). It either transmits conformational changes from CF(0) to CF(1) or is implicated in proton conduction. The protein is ATP synthase subunit delta of Picosynechococcus sp. (strain ATCC 27264 / PCC 7002 / PR-6) (Agmenellum quadruplicatum).